The chain runs to 205 residues: GTP cyclohydrolase 1 (205 aa).

Residues C93, H96, and C166 each contribute to the Zn(2+) site.

Belongs to the GTP cyclohydrolase I family. In terms of assembly, homomer.

The enzyme catalyses GTP + H2O = 7,8-dihydroneopterin 3'-triphosphate + formate + H(+). The protein operates within cofactor biosynthesis; 7,8-dihydroneopterin triphosphate biosynthesis; 7,8-dihydroneopterin triphosphate from GTP: step 1/1. The polypeptide is GTP cyclohydrolase 1 (Mycobacterium leprae (strain Br4923)).